The chain runs to 260 residues: Hydroxyacylglutathione hydrolase (260 aa).

The Zn(2+) site is built by H61, H63, D65, H66, H119, D138, and H176.

Belongs to the metallo-beta-lactamase superfamily. Glyoxalase II family. As to quaternary structure, monomer. Zn(2+) serves as cofactor.

The enzyme catalyses an S-(2-hydroxyacyl)glutathione + H2O = a 2-hydroxy carboxylate + glutathione + H(+). It participates in secondary metabolite metabolism; methylglyoxal degradation; (R)-lactate from methylglyoxal: step 2/2. Thiolesterase that catalyzes the hydrolysis of S-D-lactoyl-glutathione to form glutathione and D-lactic acid. This chain is Hydroxyacylglutathione hydrolase, found in Brucella anthropi (strain ATCC 49188 / DSM 6882 / CCUG 24695 / JCM 21032 / LMG 3331 / NBRC 15819 / NCTC 12168 / Alc 37) (Ochrobactrum anthropi).